We begin with the raw amino-acid sequence, 85 residues long: uncharacterized protein (85 aa).

This is an uncharacterized protein from Escherichia coli (Bacteriophage T4).